Consider the following 346-residue polypeptide: Holliday junction branch migration complex subunit RuvB (346 aa).

Positions 1–182 (MSEAARLIAP…FGIPVRLNFY (182 aa)) are large ATPase domain (RuvB-L). Residues leucine 21, arginine 22, glycine 63, lysine 66, threonine 67, threonine 68, 129-131 (EDF), arginine 172, tyrosine 182, and arginine 219 each bind ATP. Threonine 67 lines the Mg(2+) pocket. The interval 183–253 (TVEELELIVR…IADEALTRLL (71 aa)) is small ATPAse domain (RuvB-S). The interval 256 to 346 (SMGLDQLDRR…SQFRLTLEDD (91 aa)) is head domain (RuvB-H). Arginine 292, arginine 311, and arginine 316 together coordinate DNA.

Belongs to the RuvB family. In terms of assembly, homohexamer. Forms an RuvA(8)-RuvB(12)-Holliday junction (HJ) complex. HJ DNA is sandwiched between 2 RuvA tetramers; dsDNA enters through RuvA and exits via RuvB. An RuvB hexamer assembles on each DNA strand where it exits the tetramer. Each RuvB hexamer is contacted by two RuvA subunits (via domain III) on 2 adjacent RuvB subunits; this complex drives branch migration. In the full resolvosome a probable DNA-RuvA(4)-RuvB(12)-RuvC(2) complex forms which resolves the HJ.

Its subcellular location is the cytoplasm. It catalyses the reaction ATP + H2O = ADP + phosphate + H(+). The RuvA-RuvB-RuvC complex processes Holliday junction (HJ) DNA during genetic recombination and DNA repair, while the RuvA-RuvB complex plays an important role in the rescue of blocked DNA replication forks via replication fork reversal (RFR). RuvA specifically binds to HJ cruciform DNA, conferring on it an open structure. The RuvB hexamer acts as an ATP-dependent pump, pulling dsDNA into and through the RuvAB complex. RuvB forms 2 homohexamers on either side of HJ DNA bound by 1 or 2 RuvA tetramers; 4 subunits per hexamer contact DNA at a time. Coordinated motions by a converter formed by DNA-disengaged RuvB subunits stimulates ATP hydrolysis and nucleotide exchange. Immobilization of the converter enables RuvB to convert the ATP-contained energy into a lever motion, pulling 2 nucleotides of DNA out of the RuvA tetramer per ATP hydrolyzed, thus driving DNA branch migration. The RuvB motors rotate together with the DNA substrate, which together with the progressing nucleotide cycle form the mechanistic basis for DNA recombination by continuous HJ branch migration. Branch migration allows RuvC to scan DNA until it finds its consensus sequence, where it cleaves and resolves cruciform DNA. This Sinorhizobium medicae (strain WSM419) (Ensifer medicae) protein is Holliday junction branch migration complex subunit RuvB.